A 289-amino-acid polypeptide reads, in one-letter code: Rhodopsin (289 aa).

Residues 1–7 (YLVSPAA) are Extracellular-facing. Residues 8 to 32 (YAALGAYMFLLILVGFPVNFLTLYV) form a helical membrane-spanning segment. Residues 33–44 (TLDHKKLRTPLN) are Cytoplasmic-facing. Residues 45-67 (YILLNLAVADLFMVLGGFTTTMY) traverse the membrane as a helical segment. Over 68–81 (TSMHGYFVLGRLGC) the chain is Extracellular. A disulfide bridge connects residues Cys-81 and Cys-158. Residues 82–104 (NLEGFFATLGGEIALWSLVVLAI) traverse the membrane as a helical segment. The 'Ionic lock' involved in activated form stabilization signature appears at 105–107 (ERW). Residues 105–123 (ERWIVVCKPISNFRFTEDH) are Cytoplasmic-facing. A helical membrane pass occupies residues 124–144 (AIMGLAFSWVMALTCAVPPLV). Residues 145 to 173 (GWSRYIPEGMQCSCGVDYYTRAEGFNTES) are Extracellular-facing. The chain crosses the membrane as a helical span at residues 174–195 (FVLYMFTVHFLIPLSVIFFCYG). The Cytoplasmic portion of the chain corresponds to 196–223 (RLLCAVKEAAAAQQESETTQRAEKEVSR). Residues 224–245 (MVVLMVIGFLVCWLPYASVAWW) traverse the membrane as a helical segment. Residues 246-257 (IFCNQGSEFGPI) lie on the Extracellular side of the membrane. A helical membrane pass occupies residues 258–279 (FMTLPAFFAKTSAIYNPLIYIC). Lys-267 is subject to N6-(retinylidene)lysine. At 280–289 (MNKQFRHCMI) the chain is on the cytoplasmic side.

This sequence belongs to the G-protein coupled receptor 1 family. Opsin subfamily. In terms of processing, phosphorylated on some or all of the serine and threonine residues present in the C-terminal region. Post-translationally, contains one covalently linked retinal chromophore.

It is found in the membrane. It localises to the cell projection. The protein resides in the cilium. The protein localises to the photoreceptor outer segment. Functionally, photoreceptor required for image-forming vision at low light intensity. While most salt water fish species use retinal as chromophore, most freshwater fish use 3-dehydroretinal, or a mixture of retinal and 3-dehydroretinal. Light-induced isomerization of 11-cis to all-trans retinal triggers a conformational change that activates signaling via G-proteins. Subsequent receptor phosphorylation mediates displacement of the bound G-protein alpha subunit by arrestin and terminates signaling. The polypeptide is Rhodopsin (rho) (Procottus jeittelesii (Red sculpin)).